Here is a 455-residue protein sequence, read N- to C-terminus: Glutamyl-tRNA reductase (455 aa).

Substrate contacts are provided by residues 49–52 (TCNR), Ser-109, 114–116 (ETQ), and Gln-120. The active-site Nucleophile is Cys-50. Residue 189-194 (GAGKMG) coordinates NADP(+).

It belongs to the glutamyl-tRNA reductase family. As to quaternary structure, homodimer.

It catalyses the reaction (S)-4-amino-5-oxopentanoate + tRNA(Glu) + NADP(+) = L-glutamyl-tRNA(Glu) + NADPH + H(+). Its pathway is porphyrin-containing compound metabolism; protoporphyrin-IX biosynthesis; 5-aminolevulinate from L-glutamyl-tRNA(Glu): step 1/2. Functionally, catalyzes the NADPH-dependent reduction of glutamyl-tRNA(Glu) to glutamate 1-semialdehyde (GSA). This Bacillus subtilis (strain 168) protein is Glutamyl-tRNA reductase.